A 262-amino-acid polypeptide reads, in one-letter code: MRREKGFQVPTDGTVIYVPPGIQETRLATRSLAWVDCCRVALHTYGAVGWQLAGLTALLSAFCYAAPATWFHHSRLCLTESSPSLVFVIPVTSVIFIHCYETSHPSNIGVLLFYTLLHVPPLIVICLCLDGTLVISAALFTLLAFLSCTGVALLAPERTVRRQIVVIHALITLTFTAIVVVILRRGWSWCFKIVLSFSVLITCLAVSHFHEAALAVRYETPLERALLAAVKVFLSLVFTLLMVLRIMTLRTFLQTYFSSDKL.

The next 7 membrane-spanning stretches (helical) occupy residues 46 to 66, 77 to 97, 108 to 128, 133 to 153, 163 to 183, 186 to 206, and 226 to 246; these read GAVG…CYAA, CLTE…VIFI, IGVL…ICLC, LVIS…GVAL, QIVV…VVIL, GWSW…CLAV, and LLAA…VLRI.

It belongs to the HHV-5 US12 protein family.

It localises to the host membrane. This chain is Membrane protein US15 (US15), found in Human cytomegalovirus (strain Merlin) (HHV-5).